The following is a 261-amino-acid chain: Carnitinyl-CoA dehydratase (261 aa).

The Nucleophile role is filled by Glu-111. Glu-131 acts as the Proton acceptor in catalysis.

This sequence belongs to the enoyl-CoA hydratase/isomerase family.

The catalysed reaction is (R)-carnitinyl-CoA = crotonobetainyl-CoA + H2O. It participates in amine and polyamine metabolism; carnitine metabolism. In terms of biological role, catalyzes the reversible dehydration of L-carnitinyl-CoA to crotonobetainyl-CoA. The sequence is that of Carnitinyl-CoA dehydratase from Proteus mirabilis (strain HI4320).